The following is a 575-amino-acid chain: Septation ring formation regulator EzrA (575 aa).

Over 1–8 the chain is Extracellular; the sequence is MSNGQLIY. The helical transmembrane segment at 9-27 threads the bilayer; sequence LMVAIAVILVLAYVVAIFL. Topologically, residues 28 to 575 are cytoplasmic; sequence RKRNEGRLEA…YEKTRETIRF (548 aa). Coiled coils occupy residues 105–191, 265–301, 354–416, and 456–526; these read LKAS…FVTL, LYEA…LYDI, VRRI…IEKD, and TASN…IQEA.

It belongs to the EzrA family.

It localises to the cell membrane. Its function is as follows. Negative regulator of FtsZ ring formation; modulates the frequency and position of FtsZ ring formation. Inhibits FtsZ ring formation at polar sites. Interacts either with FtsZ or with one of its binding partners to promote depolymerization. The polypeptide is Septation ring formation regulator EzrA (Streptococcus pneumoniae serotype 4 (strain ATCC BAA-334 / TIGR4)).